Here is a 413-residue protein sequence, read N- to C-terminus: Hemocyanin type 2 unit e (413 aa).

An N-linked (GlcNAc...) (high mannose) asparagine glycan is attached at Asn17. Residue His49 coordinates Cu cation. A disulfide bridge links Cys55 with Cys66. A cross-link (2'-(S-cysteinyl)-histidine (Cys-His)) is located at residues 67-69 (CVH). Cu cation is bound by residues His69 and His78. A glycan (N-linked (GlcNAc...) (high mannose) asparagine) is linked at Asn127. 2 disulfide bridges follow: Cys179–Cys246 and Cys336–Cys342. Cu cation-binding residues include His189, His193, and His220.

The protein belongs to the tyrosinase family. Hemocyanin subfamily. As to quaternary structure, decamers of large identical subunits, each containing 8 globular oxygen-binding functional units. Cu(2+) is required as a cofactor. In terms of tissue distribution, hemolymph.

It is found in the secreted. The protein resides in the extracellular space. Its function is as follows. Hemocyanins are copper-containing oxygen carriers occurring freely dissolved in the hemolymph of many mollusks and arthropods. This is Hemocyanin type 2 unit e from Rapana venosa (Veined rapa whelk).